Consider the following 480-residue polypeptide: MVKICCIGAGYVGGPTMAVIALKCPAIEVVVVDISKPRIDAWNSEQLPIYEPGLDEVVKECRGRNLFFSTDVEKHVAEANIIFVSVNTPTKTRGLGAGKAADLTYWESAARMIADVSKSDKIVVEKSTVPVKTAEAIEKILTHNSKGINYQILSNPEFLAEGTAIEDLFKPDRVLIGGRETPEGKKAVQALKEVYAHWVPEDRIITTNLWSAELSKLAANAFLAQRISSVNAISALCEATGANVAEVAYSVGKDSRIGPKFLNASVGFGGSCFQKDILNLVYICECNGLPEVANYWKQVIKINDYQKSRFVNRVVSSMFNTVSGKKIAVLGFAFKKDTGDTRETPAIDVCHGLLGDKAQISIYDPQVTEDQIQRDLAMSKFDWDHPMHLQPTSPTAFKQVSVVWDAYEATKGAHGVCILTEWDEFKTLDYQKIFDNMQKPAFVFDGRNVVDAEKLREIGFIVYSIGKPLDAWLKDMPAVA.

Residues 8–13, Asp-33, Arg-38, 86–90, 127–128, and Glu-161 each bind NAD(+); these read GAGYVG, VNTPT, and ST. Substrate contacts are provided by residues 157 to 161, 216 to 223, and 256 to 269; these read EFLAE, KLAANAFL, and RIGP…VGFG. The active-site Nucleophile is the Cys-272. Position 272 to 275 (272 to 275) interacts with NAD(+); it reads CFQK. 334 to 335 provides a ligand contact to substrate; it reads FK. Arg-342 contacts NAD(+). Ser-393 is modified (phosphoserine). Arg-447 is a substrate binding site.

It belongs to the UDP-glucose/GDP-mannose dehydrogenase family.

The catalysed reaction is UDP-alpha-D-glucose + 2 NAD(+) + H2O = UDP-alpha-D-glucuronate + 2 NADH + 3 H(+). The protein operates within nucleotide-sugar biosynthesis; UDP-alpha-D-glucuronate biosynthesis; UDP-alpha-D-glucuronate from UDP-alpha-D-glucose: step 1/1. Its function is as follows. Involved in the biosynthesis of UDP-glucuronic acid (UDP-GlcA), providing nucleotide sugars for cell-wall polymers. The protein is UDP-glucose 6-dehydrogenase 4 (UGD4) of Oryza sativa subsp. japonica (Rice).